A 509-amino-acid chain; its full sequence is Maturase K (509 aa).

This sequence belongs to the intron maturase 2 family. MatK subfamily.

It localises to the plastid. The protein resides in the chloroplast. Functionally, usually encoded in the trnK tRNA gene intron. Probably assists in splicing its own and other chloroplast group II introns. This Nymphaea odorata (White water lily) protein is Maturase K.